A 228-amino-acid polypeptide reads, in one-letter code: MSRAGNRGNTQARWLGTGLLGLFLLPMYLSLEVSVGKATTIYAINGSSILLPCTFSSCYGFENLYFKWSYNNSETSRILIDGIVKNDKSDPKVRVKDDDRITLEGSTKEKTNNISILLSDLEFSDTGRYTCFVRNPKEKDLNNSATIFLQVVDKLEKVDNTVTLIILAVVGGVIGLLVCILLLKKLITFILKKTREKKKECLVSSSGNDNTENGLPGSKAEEKPPTKV.

The signal sequence occupies residues 1–30 (MSRAGNRGNTQARWLGTGLLGLFLLPMYLS). Residues 31 to 148 (LEVSVGKATT…KDLNNSATIF (118 aa)) enclose the Ig-like C2-type domain. Residues 31-161 (LEVSVGKATT…VDKLEKVDNT (131 aa)) lie on the Extracellular side of the membrane. Asn-45, Asn-71, Asn-113, and Asn-142 each carry an N-linked (GlcNAc...) asparagine glycan. Cys-53 and Cys-131 are joined by a disulfide. The helical transmembrane segment at 162 to 182 (VTLIILAVVGGVIGLLVCILL) threads the bilayer. Residues 183–228 (LKKLITFILKKTREKKKECLVSSSGNDNTENGLPGSKAEEKPPTKV) are Cytoplasmic-facing. Residues 199–228 (KECLVSSSGNDNTENGLPGSKAEEKPPTKV) form a disordered region. The span at 203 to 213 (VSSSGNDNTEN) shows a compositional bias: polar residues. Residues 219–228 (KAEEKPPTKV) show a composition bias toward basic and acidic residues.

It belongs to the sodium channel auxiliary subunit SCN4B (TC 8.A.17) family. In terms of assembly, a voltage-gated sodium (Nav) channel consists of an ion-conducting pore-forming alpha subunit functional on its own that is regulated by one or more beta subunits. The beta subunit SCN4B is disulfide-linked to the pore-forming alpha subunit. Interacts with SCN1A; regulatory subunit of SCN1A/Nav1.1. Interacts with SCN2A; regulatory subunit of SCN2A/Nav1.2. Post-translationally, contains an interchain disulfide bond with SCN2A.

The protein resides in the cell membrane. Regulatory subunit of multiple voltage-gated sodium (Nav) channels directly mediating the depolarization of excitable membranes. Navs, also called VGSCs (voltage-gated sodium channels) or VDSCs (voltage-dependent sodium channels), operate by switching between closed and open conformations depending on the voltage difference across the membrane. In the open conformation they allow Na(+) ions to selectively pass through the pore, along their electrochemical gradient. The influx of Na+ ions provokes membrane depolarization, initiating the propagation of electrical signals throughout cells and tissues. The accessory beta subunits participate in localization and functional modulation of the Nav channels. Modulates the activity of SCN1A/Nav1.1. Modulates the activity of SCN2A/Nav1.2. This chain is Sodium channel regulatory subunit beta-4, found in Mus musculus (Mouse).